Reading from the N-terminus, the 395-residue chain is ATP phosphoribosyltransferase regulatory subunit (395 aa).

This sequence belongs to the class-II aminoacyl-tRNA synthetase family. HisZ subfamily. In terms of assembly, heteromultimer composed of HisG and HisZ subunits.

It localises to the cytoplasm. The protein operates within amino-acid biosynthesis; L-histidine biosynthesis; L-histidine from 5-phospho-alpha-D-ribose 1-diphosphate: step 1/9. Functionally, required for the first step of histidine biosynthesis. May allow the feedback regulation of ATP phosphoribosyltransferase activity by histidine. The polypeptide is ATP phosphoribosyltransferase regulatory subunit (Pseudomonas entomophila (strain L48)).